The sequence spans 121 residues: Small ribosomal subunit protein uS13 (121 aa).

The disordered stretch occupies residues 91-121 (HRMSLPVRGQRTRTNARTRRGSRKTVAGRKK). A compositionally biased stretch (basic residues) spans 100-121 (QRTRTNARTRRGSRKTVAGRKK).

Belongs to the universal ribosomal protein uS13 family. In terms of assembly, part of the 30S ribosomal subunit. Forms a loose heterodimer with protein S19. Forms two bridges to the 50S subunit in the 70S ribosome.

Its function is as follows. Located at the top of the head of the 30S subunit, it contacts several helices of the 16S rRNA. In the 70S ribosome it contacts the 23S rRNA (bridge B1a) and protein L5 of the 50S subunit (bridge B1b), connecting the 2 subunits; these bridges are implicated in subunit movement. Contacts the tRNAs in the A and P-sites. This Prochlorococcus marinus (strain AS9601) protein is Small ribosomal subunit protein uS13.